A 436-amino-acid chain; its full sequence is Gamma-glutamyl phosphate reductase (436 aa).

The protein belongs to the gamma-glutamyl phosphate reductase family.

Its subcellular location is the cytoplasm. It carries out the reaction L-glutamate 5-semialdehyde + phosphate + NADP(+) = L-glutamyl 5-phosphate + NADPH + H(+). Its pathway is amino-acid biosynthesis; L-proline biosynthesis; L-glutamate 5-semialdehyde from L-glutamate: step 2/2. Catalyzes the NADPH-dependent reduction of L-glutamate 5-phosphate into L-glutamate 5-semialdehyde and phosphate. The product spontaneously undergoes cyclization to form 1-pyrroline-5-carboxylate. The protein is Gamma-glutamyl phosphate reductase of Salinibacter ruber (strain DSM 13855 / M31).